The primary structure comprises 101 residues: Apolipoprotein C-II (101 aa).

The first 22 residues, 1-22 (MGTRYLLVLLLVLLVLGFEVQG), serve as a signal peptide directing secretion. The tract at residues 66–74 (TMDEKIRDI) is lipid binding. The segment at 78–101 (STAAVSTYAGIFTDQLLSMLKGDS) is lipoprotein lipase cofactor.

This sequence belongs to the apolipoprotein C2 family. In terms of processing, proapolipoprotein C-II is synthesized as a sialic acid containing glycoprotein which is subsequently desialylated prior to its proteolytic processing. Proapolipoprotein C-II, the major form found in plasma undergoes proteolytic cleavage of its N-terminal hexapeptide to generate apolipoprotein C-II, which occurs as the minor form in plasma. Highly expressed in the liver. Moderately expressed in the ileum, jejunum and ovary.

The protein localises to the secreted. Its function is as follows. Component of chylomicrons, very low-density lipoproteins (VLDL), low-density lipoproteins (LDL), and high-density lipoproteins (HDL) in plasma. Plays an important role in lipoprotein metabolism as an activator of lipoprotein lipase. Both proapolipoprotein C-II and apolipoprotein C-II can activate lipoprotein lipase. This Canis lupus familiaris (Dog) protein is Apolipoprotein C-II (APOC2).